Reading from the N-terminus, the 436-residue chain is GTPase Der (436 aa).

EngA-type G domains are found at residues 4–167 (PVVA…PKRG) and 176–351 (IKFC…ENHA). GTP is bound by residues 10-17 (GRPNVGKS), 57-61 (DTGGI), 119-122 (NKID), 182-189 (GRPNVGKS), 229-233 (DTAGM), and 294-297 (NKWD). The KH-like domain occupies 352–436 (MRVQTNVLNE…PIKIIARPRK (85 aa)).

Belongs to the TRAFAC class TrmE-Era-EngA-EngB-Septin-like GTPase superfamily. EngA (Der) GTPase family. As to quaternary structure, associates with the 50S ribosomal subunit.

GTPase that plays an essential role in the late steps of ribosome biogenesis. This Geobacillus sp. (strain WCH70) protein is GTPase Der.